Reading from the N-terminus, the 291-residue chain is 3-hydroxy-5-phosphonooxypentane-2,4-dione thiolase (291 aa).

The Schiff-base intermediate with substrate role is filled by Lys203.

The protein belongs to the DeoC/FbaB aldolase family. In terms of assembly, homodecamer.

The protein localises to the cytoplasm. The enzyme catalyses dihydroxyacetone phosphate + acetyl-CoA = 3-hydroxy-2,4-dioxopentyl phosphate + CoA. Functionally, involved in the degradation of phospho-AI-2, thereby terminating induction of the lsr operon and closing the AI-2 signaling cycle. Catalyzes the transfer of an acetyl moiety from 3-hydroxy-5-phosphonooxypentane-2,4-dione to CoA to form glycerone phosphate and acetyl-CoA. This chain is 3-hydroxy-5-phosphonooxypentane-2,4-dione thiolase, found in Salmonella paratyphi A (strain ATCC 9150 / SARB42).